A 357-amino-acid chain; its full sequence is Quinolinate synthase (357 aa).

Residues H50 and S71 each coordinate iminosuccinate. A [4Fe-4S] cluster-binding site is contributed by C116. Iminosuccinate is bound by residues Y142 to N144 and S159. [4Fe-4S] cluster is bound at residue C203. Residues H229–E231 and T246 contribute to the iminosuccinate site. Position 300 (C300) interacts with [4Fe-4S] cluster.

Belongs to the quinolinate synthase family. Type 1 subfamily. The cofactor is [4Fe-4S] cluster.

It is found in the cytoplasm. The enzyme catalyses iminosuccinate + dihydroxyacetone phosphate = quinolinate + phosphate + 2 H2O + H(+). It functions in the pathway cofactor biosynthesis; NAD(+) biosynthesis; quinolinate from iminoaspartate: step 1/1. In terms of biological role, catalyzes the condensation of iminoaspartate with dihydroxyacetone phosphate to form quinolinate. The polypeptide is Quinolinate synthase (Shewanella oneidensis (strain ATCC 700550 / JCM 31522 / CIP 106686 / LMG 19005 / NCIMB 14063 / MR-1)).